The following is a 552-amino-acid chain: Glutamine--tRNA ligase (552 aa).

The 'HIGH' region signature appears at 34-44 (PEPNGYLHIGH). ATP is bound by residues 35 to 37 (EPN) and 41 to 47 (HIGHAKS). Asp67 and Tyr212 together coordinate L-glutamine. ATP is bound by residues Thr231, 261–262 (RL), and 269–271 (MSK). Positions 268-272 (LMSKR) match the 'KMSKS' region motif.

The protein belongs to the class-I aminoacyl-tRNA synthetase family. Monomer.

The protein resides in the cytoplasm. It carries out the reaction tRNA(Gln) + L-glutamine + ATP = L-glutaminyl-tRNA(Gln) + AMP + diphosphate. In Hamiltonella defensa subsp. Acyrthosiphon pisum (strain 5AT), this protein is Glutamine--tRNA ligase.